We begin with the raw amino-acid sequence, 190 residues long: Pyridoxal 5'-phosphate synthase subunit PdxT (190 aa).

46-48 (GES) provides a ligand contact to L-glutamine. C78 serves as the catalytic Nucleophile. L-glutamine contacts are provided by residues R108 and 137-138 (IR). Residues H174 and E176 each act as charge relay system in the active site.

This sequence belongs to the glutaminase PdxT/SNO family. In the presence of PdxS, forms a dodecamer of heterodimers. Only shows activity in the heterodimer.

The enzyme catalyses aldehydo-D-ribose 5-phosphate + D-glyceraldehyde 3-phosphate + L-glutamine = pyridoxal 5'-phosphate + L-glutamate + phosphate + 3 H2O + H(+). It carries out the reaction L-glutamine + H2O = L-glutamate + NH4(+). The protein operates within cofactor biosynthesis; pyridoxal 5'-phosphate biosynthesis. Functionally, catalyzes the hydrolysis of glutamine to glutamate and ammonia as part of the biosynthesis of pyridoxal 5'-phosphate. The resulting ammonia molecule is channeled to the active site of PdxS. This is Pyridoxal 5'-phosphate synthase subunit PdxT from Chloroflexus aurantiacus (strain ATCC 29366 / DSM 635 / J-10-fl).